The following is a 169-amino-acid chain: Cell division inhibitor SulA (169 aa).

The ftsZ binding stretch occupies residues 106–112 (ALRTGNY). The lon protease binding stretch occupies residues 162–169 (KIHSNLYH).

This sequence belongs to the SulA family. Interacts with FtsZ. In terms of processing, is rapidly cleaved and degraded by the Lon protease once DNA damage is repaired.

Component of the SOS system and an inhibitor of cell division. Accumulation of SulA causes rapid cessation of cell division and the appearance of long, non-septate filaments. In the presence of GTP, binds a polymerization-competent form of FtsZ in a 1:1 ratio, thus inhibiting FtsZ polymerization and therefore preventing it from participating in the assembly of the Z ring. This mechanism prevents the premature segregation of damaged DNA to daughter cells during cell division. The chain is Cell division inhibitor SulA from Escherichia coli O45:K1 (strain S88 / ExPEC).